Reading from the N-terminus, the 743-residue chain is Phosphoribosylformylglycinamidine synthase subunit PurL (743 aa).

His50 is an active-site residue. Tyr53 and Lys92 together coordinate ATP. Mg(2+) is bound at residue Glu94. Substrate contacts are provided by residues 95–98 (SHNH) and Arg117. His96 serves as the catalytic Proton acceptor. Asp118 is a binding site for Mg(2+). A substrate-binding site is contributed by Gln241. Asp269 contributes to the Mg(2+) binding site. 313–315 (ESQ) contributes to the substrate binding site. Positions 494 and 531 each coordinate ATP. Position 532 (Asn532) interacts with Mg(2+). Ser534 is a substrate binding site.

The protein belongs to the FGAMS family. Monomer. Part of the FGAM synthase complex composed of 1 PurL, 1 PurQ and 2 PurS subunits.

Its subcellular location is the cytoplasm. The catalysed reaction is N(2)-formyl-N(1)-(5-phospho-beta-D-ribosyl)glycinamide + L-glutamine + ATP + H2O = 2-formamido-N(1)-(5-O-phospho-beta-D-ribosyl)acetamidine + L-glutamate + ADP + phosphate + H(+). It functions in the pathway purine metabolism; IMP biosynthesis via de novo pathway; 5-amino-1-(5-phospho-D-ribosyl)imidazole from N(2)-formyl-N(1)-(5-phospho-D-ribosyl)glycinamide: step 1/2. Part of the phosphoribosylformylglycinamidine synthase complex involved in the purines biosynthetic pathway. Catalyzes the ATP-dependent conversion of formylglycinamide ribonucleotide (FGAR) and glutamine to yield formylglycinamidine ribonucleotide (FGAM) and glutamate. The FGAM synthase complex is composed of three subunits. PurQ produces an ammonia molecule by converting glutamine to glutamate. PurL transfers the ammonia molecule to FGAR to form FGAM in an ATP-dependent manner. PurS interacts with PurQ and PurL and is thought to assist in the transfer of the ammonia molecule from PurQ to PurL. The polypeptide is Phosphoribosylformylglycinamidine synthase subunit PurL (Rhizobium meliloti (strain 1021) (Ensifer meliloti)).